The following is an 811-amino-acid chain: G-type lectin S-receptor-like serine/threonine-protein kinase LECRK2 (811 aa).

The signal sequence occupies residues methionine 1–alanine 23. Residues glutamine 24–glycine 153 form the Bulb-type lectin domain. The Extracellular portion of the chain corresponds to glutamine 24–serine 464. 7 N-linked (GlcNAc...) asparagine glycosylation sites follow: asparagine 26, asparagine 39, asparagine 59, asparagine 219, asparagine 226, asparagine 237, and asparagine 242. Positions proline 292 to arginine 344 constitute an EGF-like; atypical domain. 5 disulfides stabilise this stretch: cysteine 296–cysteine 314, cysteine 308–cysteine 325, cysteine 327–cysteine 343, cysteine 389–cysteine 411, and cysteine 393–cysteine 399. An N-linked (GlcNAc...) asparagine glycan is attached at asparagine 321. The 85-residue stretch at cysteine 352–proline 436 folds into the PAN domain. The helical transmembrane segment at leucine 465–threonine 485 threads the bilayer. The Cytoplasmic portion of the chain corresponds to tyrosine 486 to alanine 811. One can recognise a Protein kinase domain in the interval glycine 521–valine 795. ATP is bound by residues leucine 527–valine 535 and lysine 551. The Proton acceptor role is filled by aspartate 645.

This sequence belongs to the protein kinase superfamily. Ser/Thr protein kinase family.

Its subcellular location is the membrane. It carries out the reaction L-seryl-[protein] + ATP = O-phospho-L-seryl-[protein] + ADP + H(+). The catalysed reaction is L-threonyl-[protein] + ATP = O-phospho-L-threonyl-[protein] + ADP + H(+). Involved in resistance against the herbivorous insect brown planthopper (N.lugens, BPH). Member of the BPH3 (BPH resistance locus 3) cluster which contains LECRK1, LECRK2 and LECRK3. The sequence is that of G-type lectin S-receptor-like serine/threonine-protein kinase LECRK2 from Oryza sativa subsp. indica (Rice).